We begin with the raw amino-acid sequence, 420 residues long: Zinc finger protein Pegasus (420 aa).

A Glycyl lysine isopeptide (Lys-Gly) (interchain with G-Cter in SUMO2) cross-link involves residue Lys-5. 3 C2H2-type zinc fingers span residues Leu-82 to His-104, His-110 to His-132, and Tyr-138 to His-161. Residue Lys-185 forms a Glycyl lysine isopeptide (Lys-Gly) (interchain with G-Cter in SUMO2) linkage. Polar residues-rich tracts occupy residues Gln-223–Thr-236 and Leu-262–Ala-273. 2 disordered regions span residues Gln-223–Met-247 and Leu-262–Pro-356. Positions Gln-290–Thr-311 are enriched in low complexity. Residues Ser-332–Ser-349 show a composition bias toward polar residues. The C2H2-type 4; degenerate zinc-finger motif lies at His-364 to His-387. The segment at Phe-393–His-417 adopts a C2H2-type 5 zinc-finger fold.

Belongs to the Ikaros C2H2-type zinc-finger protein family. As to quaternary structure, self-associates. Interacts with other family members; IKZF1, IKZF2, IKZF3 and IKZF4.

The protein resides in the nucleus. Functionally, transcriptional repressor that binds the core 5'GNNTGTNG-3' DNA consensus sequence. Involved in megakaryocyte differentiation. The protein is Zinc finger protein Pegasus (IKZF5) of Pongo abelii (Sumatran orangutan).